Here is a 583-residue protein sequence, read N- to C-terminus: MGLFTVTKKATTPFDGQKPGTSGLRKKVTVFQQPHYLQNFVQSTFNALPVDQVRGATIVVSGDGRYFSKDAVQIITKMAAANGVRRVWVGQNSLMSTPAVSAVIRERVGADGSKATGAFILTASHNPGGPKEDFGIKYNMGNGGPAPESVTDKIFSNTTTISEYLISEDLPDVDISVVGVTSFSGPEGPFDVDVFDSSVDYIKLMKTIFDFEAIKKLLTSPKFTFCYDALHGVAGAYAKHIFVEELGADESSLLNCVPKEDFGGGHPDPNLTYAKELVERMGLGKSSSNVEPPEFGAAADGDADRNMILGKRFFVTPSDSVAIIAANAVQSIPYFASGLKGVARSMPTSAALDVVAKNLNLKFFEVPTGWKFFGNLMDAGMCSICGEESFGTGSDHIREKDGIWAVLAWLSIIAFKNKDNLGGDKLVTVEDIVRQHWATYGRHYYTRYDYENVDAGAAKELMANLVSMQSSLSDVNKLVKEIRSDVSEVVAADEFEYKDPVDGSVSKHQGIRYLFGDGSRLVFRLSGTGSVGATIRVYIEQYERDSSKTGRDSQDALAPLVDVALKLSKMQEYTGRSAPTVIT.

The alpha-D-glucose 1,6-bisphosphate site is built by R25 and S124. Residue S124 is the Phosphoserine intermediate of the active site. Mg(2+) is bound by residues S124, D300, D302, and D304. S124 carries the phosphoserine modification. Alpha-D-glucose 1,6-bisphosphate is bound by residues D304, R305, T368, E387, S389, and K400.

The protein belongs to the phosphohexose mutase family. Monomer. Mg(2+) serves as cofactor. In terms of processing, autophosphorylated. Mostly expressed in roots and coleoptiles, and, to a lower extent, in leaves, pollen and developing seeds.

Its subcellular location is the cytoplasm. The enzyme catalyses alpha-D-glucose 1-phosphate = alpha-D-glucose 6-phosphate. It catalyses the reaction O-phospho-L-seryl-[protein] + alpha-D-glucose 1-phosphate = alpha-D-glucose 1,6-bisphosphate + L-seryl-[protein]. It carries out the reaction alpha-D-glucose 1,6-bisphosphate + L-seryl-[protein] = O-phospho-L-seryl-[protein] + alpha-D-glucose 6-phosphate. Its function is as follows. Catalyzes the reversible isomerization of alpha-D-glucose 1-phosphate to alpha-D-glucose 6-phosphate. The mechanism proceeds via the intermediate compound alpha-D-glucose 1,6-bisphosphate. This enzyme participates in both the breakdown and synthesis of glucose. This Zea mays (Maize) protein is Phosphoglucomutase, cytoplasmic 1.